An 84-amino-acid polypeptide reads, in one-letter code: U4-theraphotoxin-Hhn1ac (84 aa).

A signal peptide spans Met1 to Ala22. Residues Glu23–Arg47 constitute a propeptide that is removed on maturation. 3 cysteine pairs are disulfide-bonded: Cys51–Cys65, Cys55–Cys76, and Cys70–Cys81.

Belongs to the neurotoxin 12 (Hwtx-2) family. 02 (Hwtx-2) subfamily. As to expression, expressed by the venom gland.

The protein localises to the secreted. Functionally, postsynaptic neurotoxin. This Cyriopagopus hainanus (Chinese bird spider) protein is U4-theraphotoxin-Hhn1ac.